The chain runs to 398 residues: Sphingosine 1-phosphate receptor 5 (398 aa).

The Extracellular segment spans residues M1 to A40. Residue N20 is glycosylated (N-linked (GlcNAc...) asparagine). Residues V41–L61 traverse the membrane as a helical segment. Residues G62–P70 are Cytoplasmic-facing. Residues M71 to A91 form a helical membrane-spanning segment. At N92–R111 the chain is on the extracellular side. Residues E112–E132 form a helical membrane-spanning segment. The Cytoplasmic portion of the chain corresponds to R133–T151. Residues L152–G172 form a helical membrane-spanning segment. The Extracellular segment spans residues W173 to A192. A helical membrane pass occupies residues Y193–A213. Topologically, residues R214–T252 are cytoplasmic. The helical transmembrane segment at L253–L273 threads the bilayer. At D274–Q287 the chain is on the extracellular side. The helical transmembrane segment at A288–L308 threads the bilayer. Topologically, residues T309–D398 are cytoplasmic. A lipid anchor (S-palmitoyl cysteine) is attached at C323. Residues G329–D398 are disordered. Positions S333–G347 are enriched in low complexity. The residue at position 381 (S381) is a Phosphoserine.

Belongs to the G-protein coupled receptor 1 family. In terms of tissue distribution, widely expressed in the brain, most prominently in the corpus callosum, which is predominantly white matter. Detected in spleen, peripheral blood leukocytes, placenta, lung, aorta and fetal spleen. Low-level signal detected in many tissue extracts. Overexpressed in leukemic large granular lymphocytes. Isoform 1 is predominantly expressed in peripheral tissues. Isoform 2 is expressed in brain, spleen and peripheral blood leukocytes.

Its subcellular location is the cell membrane. Functionally, receptor for the lysosphingolipid sphingosine 1-phosphate (S1P). S1P is a bioactive lysophospholipid that elicits diverse physiological effect on most types of cells and tissues. Is coupled to both the G(i/0)alpha and G(12) subclass of heteromeric G-proteins. May play a regulatory role in the transformation of radial glial cells into astrocytes and may affect proliferative activity of these cells. The protein is Sphingosine 1-phosphate receptor 5 (S1PR5) of Homo sapiens (Human).